Reading from the N-terminus, the 229-residue chain is DNA mismatch repair protein MutH (229 aa).

It belongs to the MutH family.

The protein localises to the cytoplasm. Functionally, sequence-specific endonuclease that cleaves unmethylated GATC sequences. It is involved in DNA mismatch repair. This Shigella boydii serotype 18 (strain CDC 3083-94 / BS512) protein is DNA mismatch repair protein MutH.